An 868-amino-acid polypeptide reads, in one-letter code: mRNA-capping enzyme (868 aa).

Lys-282 (N6-GMP-lysine intermediate) is an active-site residue. The region spanning 594-868 is the mRNA cap 0 methyltransferase domain; it reads GIYRAQTALI…LFGFICLRKN (275 aa). Residues Lys-607, Gly-624, Asp-646, and 710-712 each bind S-adenosyl-L-methionine; that span reads LFI.

The protein in the N-terminal section; belongs to the dsDNA virus mRNA guanylyltransferase family. This sequence in the C-terminal section; belongs to the class I-like SAM-binding methyltransferase superfamily. mRNA cap 0 methyltransferase family. In terms of assembly, part of the viral DNA-directed RNA polymerase that consists of 8 polII-like subunits (RPB1, RPB2, RPB3, RPB5, RPB6, RPB7, RPB9, RPB10), a capping enzyme and a termination factor.

The protein localises to the virion. It catalyses the reaction a 5'-end triphospho-ribonucleoside in mRNA + H2O = a 5'-end diphospho-ribonucleoside in mRNA + phosphate + H(+). It carries out the reaction a 5'-end diphospho-ribonucleoside in mRNA + GTP + H(+) = a 5'-end (5'-triphosphoguanosine)-ribonucleoside in mRNA + diphosphate. The enzyme catalyses a 5'-end (5'-triphosphoguanosine)-ribonucleoside in mRNA + S-adenosyl-L-methionine = a 5'-end (N(7)-methyl 5'-triphosphoguanosine)-ribonucleoside in mRNA + S-adenosyl-L-homocysteine. It functions in the pathway mRNA processing; mRNA capping. In terms of biological role, probably catalyzes the second reaction in the mRNA cap formation pathway. Forms a covalent complex with GTP. The sequence is that of mRNA-capping enzyme from Ornithodoros (relapsing fever ticks).